The following is a 230-amino-acid chain: Orotidine 5'-phosphate decarboxylase (230 aa).

Residues Asp11, Lys34, Asp61–Thr70, Thr117, Arg179, Gln188, Gly208, and Arg209 contribute to the substrate site. Lys63 functions as the Proton donor in the catalytic mechanism.

The protein belongs to the OMP decarboxylase family. Type 1 subfamily. Homodimer.

It catalyses the reaction orotidine 5'-phosphate + H(+) = UMP + CO2. The protein operates within pyrimidine metabolism; UMP biosynthesis via de novo pathway; UMP from orotate: step 2/2. Catalyzes the decarboxylation of orotidine 5'-monophosphate (OMP) to uridine 5'-monophosphate (UMP). The polypeptide is Orotidine 5'-phosphate decarboxylase (Streptococcus pyogenes serotype M49 (strain NZ131)).